The following is a 174-amino-acid chain: Protein TM_1551 (174 aa).

Positions 2–174 (IGEHPYVKWA…IYRFTVERYK (173 aa)) constitute an AMMECR1 domain.

In Thermotoga maritima (strain ATCC 43589 / DSM 3109 / JCM 10099 / NBRC 100826 / MSB8), this protein is Protein TM_1551.